We begin with the raw amino-acid sequence, 570 residues long: Sulfite reductase [NADPH] hemoprotein beta-component (570 aa).

Positions 434, 440, 479, and 483 each coordinate [4Fe-4S] cluster. Cys-483 serves as a coordination point for siroheme.

Belongs to the nitrite and sulfite reductase 4Fe-4S domain family. As to quaternary structure, alpha(8)-beta(8). The alpha component is a flavoprotein, the beta component is a hemoprotein. Requires siroheme as cofactor. [4Fe-4S] cluster is required as a cofactor.

It catalyses the reaction hydrogen sulfide + 3 NADP(+) + 3 H2O = sulfite + 3 NADPH + 4 H(+). It functions in the pathway sulfur metabolism; hydrogen sulfide biosynthesis; hydrogen sulfide from sulfite (NADPH route): step 1/1. Component of the sulfite reductase complex that catalyzes the 6-electron reduction of sulfite to sulfide. This is one of several activities required for the biosynthesis of L-cysteine from sulfate. This chain is Sulfite reductase [NADPH] hemoprotein beta-component, found in Klebsiella pneumoniae subsp. pneumoniae (strain ATCC 700721 / MGH 78578).